The sequence spans 349 residues: tRNA pseudouridine synthase D (349 aa).

Phe27 contributes to the substrate binding site. Asp80 functions as the Nucleophile in the catalytic mechanism. Asn129 is a substrate binding site. Residues 155-303 (GVPNYFGAQR…VEAARRAMLL (149 aa)) enclose the TRUD domain. Phe329 serves as a coordination point for substrate.

The protein belongs to the pseudouridine synthase TruD family.

The enzyme catalyses uridine(13) in tRNA = pseudouridine(13) in tRNA. In terms of biological role, responsible for synthesis of pseudouridine from uracil-13 in transfer RNAs. The sequence is that of tRNA pseudouridine synthase D from Escherichia coli O81 (strain ED1a).